The following is a 52-amino-acid chain: Small, acid-soluble spore protein K (52 aa).

The disordered stretch occupies residues 1–52 (MGKQAEFWSESKNNSKIDGQPKAKSRFASKRPNGTINTHPQERMRAANQQEE).

Belongs to the SspK family.

It localises to the spore core. The sequence is that of Small, acid-soluble spore protein K from Bacillus anthracis (strain A0248).